The following is a 206-amino-acid chain: Small ribosomal subunit protein uS4 (206 aa).

The disordered stretch occupies residues 15 to 46 (MGENIWGRPKSPVNKREYGPGQHGQRRKNKLS). Residues 94-154 (RRLDAIVYRA…EKSRQLALVL (61 aa)) form the S4 RNA-binding domain.

Belongs to the universal ribosomal protein uS4 family. As to quaternary structure, part of the 30S ribosomal subunit. Contacts protein S5. The interaction surface between S4 and S5 is involved in control of translational fidelity.

Functionally, one of the primary rRNA binding proteins, it binds directly to 16S rRNA where it nucleates assembly of the body of the 30S subunit. In terms of biological role, with S5 and S12 plays an important role in translational accuracy. The polypeptide is Small ribosomal subunit protein uS4 (Cereibacter sphaeroides (strain ATCC 17029 / ATH 2.4.9) (Rhodobacter sphaeroides)).